A 214-amino-acid polypeptide reads, in one-letter code: MADITRLKGELRTEFGKGASRRLRRDFRVPAVVYGNDLDPMHVHVDILEFQAILRNEGVNAVLELEIEGQDHLVMIKAVDQNVLTLDVDHADLLNVKRGEKVEVDVPVIFTGQAAPGALVTQEADVITILADVLNIPEEITVDVEGKEIGDQVLAGDLQMPGNASLVSEEDTLIINVVEPEEEELPETDEEGEGAEGEAAEAAEGESAEGESEE.

Residues 178-214 (VEPEEEELPETDEEGEGAEGEAAEAAEGESAEGESEE) form a disordered region. Over residues 179–214 (EPEEEELPETDEEGEGAEGEAAEAAEGESAEGESEE) the composition is skewed to acidic residues.

This sequence belongs to the bacterial ribosomal protein bL25 family. CTC subfamily. Part of the 50S ribosomal subunit; part of the 5S rRNA/L5/L18/L25 subcomplex. Contacts the 5S rRNA. Binds to the 5S rRNA independently of L5 and L18.

Its function is as follows. This is one of the proteins that binds to the 5S RNA in the ribosome where it forms part of the central protuberance. This Corynebacterium jeikeium (strain K411) protein is Large ribosomal subunit protein bL25.